We begin with the raw amino-acid sequence, 762 residues long: Alpha-1,3-mannosyltransferase MNN1 (762 aa).

The Cytoplasmic segment spans residues 1 to 16 (MLALRRFILNQRSLRS). Residues 17 to 33 (CTIPILVGALIIILVLF) form a helical; Signal-anchor for type II membrane protein membrane-spanning segment. At 34 to 762 (QLVTHRNDAL…ELENSRHEQS (729 aa)) the chain is on the lumenal side. N-linked (GlcNAc...) asparagine glycosylation is found at asparagine 50, asparagine 225, asparagine 254, and asparagine 383.

This sequence belongs to the MNN1/MNT family.

The protein resides in the golgi apparatus membrane. It functions in the pathway protein modification; protein glycosylation. Functionally, responsible for addition of the terminal mannose residues to the outer chain of core N-linked polysaccharides and to O-linked mannotriose. Implicated in late Golgi modifications. The protein is Alpha-1,3-mannosyltransferase MNN1 (MNN1) of Saccharomyces cerevisiae (strain ATCC 204508 / S288c) (Baker's yeast).